The sequence spans 245 residues: Ribonuclease P protein component 3 (245 aa).

Belongs to the eukaryotic/archaeal RNase P protein component 3 family. As to quaternary structure, consists of a catalytic RNA component and at least 4-5 protein subunits.

The protein resides in the cytoplasm. The catalysed reaction is Endonucleolytic cleavage of RNA, removing 5'-extranucleotides from tRNA precursor.. In terms of biological role, part of ribonuclease P, a protein complex that generates mature tRNA molecules by cleaving their 5'-ends. This Methanothermobacter thermautotrophicus (strain ATCC 29096 / DSM 1053 / JCM 10044 / NBRC 100330 / Delta H) (Methanobacterium thermoautotrophicum) protein is Ribonuclease P protein component 3.